The primary structure comprises 488 residues: Envelope glycoprotein gp62 (488 aa).

The N-terminal stretch at 1–20 (MGKFLATLILFFQFCPLILG) is a signal peptide. The Extracellular portion of the chain corresponds to 21–442 (DYSPSCCTLT…LGLSQWAREA (422 aa)). Asn140 and Asn222 each carry an N-linked (GlcNAc...) asparagine; by host glycan. The CXXC signature appears at 225-228 (CIVC). 3 cysteine pairs are disulfide-bonded: Cys225–Cys228, Cys225–Cys401, and Cys393–Cys400. Residues Asn244 and Asn272 are each glycosylated (N-linked (GlcNAc...) asparagine; by host). The tract at residues 313-333 (AVPVAVWLVSALAIGAGVAGG) is fusion peptide. Coiled coils occupy residues 341 to 387 (ASGK…LLFW) and 397 to 429 (QEQCCFLNITNSHVSMLQERPPLENRVLTGWGL). Residues 376 to 392 (AQNRRGLDLLFWEQGGL) are immunosuppression. The short motif at 393–401 (CKALQEQCC) is the CX6CC element. Asn404 carries N-linked (GlcNAc...) asparagine; by host glycosylation. A helical membrane pass occupies residues 443–463 (LQTGITLVALLLLVILAGPCI). Cys462 carries the S-palmitoyl cysteine; by host lipid modification. Residues 464 to 488 (LRQLRHLPSRVRYPHYSLINPESSL) are Cytoplasmic-facing.

The mature envelope protein (Env) consists of a trimer of SU-TM heterodimers attached by a labile interchain disulfide bond. Specific enzymatic cleavages in vivo yield mature proteins. Envelope glycoproteins are synthesized as an inactive precursor that is N-glycosylated and processed likely by host cell furin or by a furin-like protease in the Golgi to yield the mature SU and TM proteins. The cleavage site between SU and TM requires the minimal sequence [KR]-X-[KR]-R. In terms of processing, the CXXC motif is highly conserved across a broad range of retroviral envelope proteins. It is thought to participate in the formation of a labile disulfide bond possibly with the CX6CC motif present in the transmembrane protein. Isomerization of the intersubunit disulfide bond to an SU intrachain disulfide bond is thought to occur upon receptor recognition in order to allow membrane fusion. Post-translationally, the transmembrane protein is palmitoylated.

It localises to the virion membrane. Its subcellular location is the host cell membrane. In terms of biological role, the surface protein (SU) attaches the virus to the host cell by binding to its receptor. This interaction triggers the refolding of the transmembrane protein (TM) and is thought to activate its fusogenic potential by unmasking its fusion peptide. Fusion occurs at the host cell plasma membrane. The transmembrane protein (TM) acts as a class I viral fusion protein. Under the current model, the protein has at least 3 conformational states: pre-fusion native state, pre-hairpin intermediate state, and post-fusion hairpin state. During viral and target cell membrane fusion, the coiled coil regions (heptad repeats) assume a trimer-of-hairpins structure, positioning the fusion peptide in close proximity to the C-terminal region of the ectodomain. The formation of this structure appears to drive apposition and subsequent fusion of viral and target cell membranes. Membranes fusion leads to delivery of the nucleocapsid into the cytoplasm. The chain is Envelope glycoprotein gp62 (env) from Human T-cell leukemia virus 1 (isolate Caribbea CH subtype A) (HTLV-1).